Here is a 342-residue protein sequence, read N- to C-terminus: Inositol 2-dehydrogenase 2 (342 aa).

Belongs to the Gfo/Idh/MocA family. Homotetramer.

The enzyme catalyses myo-inositol + NAD(+) = scyllo-inosose + NADH + H(+). Functionally, involved in the oxidation of myo-inositol (MI) to 2-keto-myo-inositol (2KMI or 2-inosose). This Mycolicibacterium vanbaalenii (strain DSM 7251 / JCM 13017 / BCRC 16820 / KCTC 9966 / NRRL B-24157 / PYR-1) (Mycobacterium vanbaalenii) protein is Inositol 2-dehydrogenase 2.